The primary structure comprises 508 residues: Histidine ammonia-lyase (508 aa).

The segment at residues 143 to 145 is a cross-link (5-imidazolinone (Ala-Gly)); that stretch reads ASG. Serine 144 carries the post-translational modification 2,3-didehydroalanine (Ser).

Belongs to the PAL/histidase family. Post-translationally, contains an active site 4-methylidene-imidazol-5-one (MIO), which is formed autocatalytically by cyclization and dehydration of residues Ala-Ser-Gly.

The protein localises to the cytoplasm. It carries out the reaction L-histidine = trans-urocanate + NH4(+). The protein operates within amino-acid degradation; L-histidine degradation into L-glutamate; N-formimidoyl-L-glutamate from L-histidine: step 1/3. This Anaeromyxobacter dehalogenans (strain 2CP-C) protein is Histidine ammonia-lyase.